Consider the following 393-residue polypeptide: S-adenosylmethionine synthase 1 (393 aa).

Glu9 is a binding site for Mg(2+). His15 is an ATP binding site. Residue Glu43 coordinates K(+). Glu56 and Gln99 together coordinate L-methionine. Residues Asp167–Lys169, Ser235–Phe238, Asp246, Arg252–Lys253, Ala269, Lys273, and Lys277 each bind ATP. Asp246 is a binding site for L-methionine. Lys277 is a binding site for L-methionine.

Belongs to the AdoMet synthase family. As to quaternary structure, homotetramer. The cofactor is Mn(2+). Mg(2+) is required as a cofactor. Co(2+) serves as cofactor. Requires K(+) as cofactor.

The protein localises to the cytoplasm. It carries out the reaction L-methionine + ATP + H2O = S-adenosyl-L-methionine + phosphate + diphosphate. It functions in the pathway amino-acid biosynthesis; S-adenosyl-L-methionine biosynthesis; S-adenosyl-L-methionine from L-methionine: step 1/1. Functionally, catalyzes the formation of S-adenosylmethionine from methionine and ATP. The reaction comprises two steps that are both catalyzed by the same enzyme: formation of S-adenosylmethionine (AdoMet) and triphosphate, and subsequent hydrolysis of the triphosphate. The sequence is that of S-adenosylmethionine synthase 1 (METK1) from Picea sitchensis (Sitka spruce).